The chain runs to 136 residues: MAKKSSSRLPKRKGEYTYRGKTVSELQELSLEEFAELLPSRERRSIKRGFTDGQKKVLHEFKEGKKIRTHHRDMIILPEMIGIAIEVHNGKEFVNVELQPEMIGHRFGEFAPTRSRVNHGSAGVGATRSSKFVPLK.

This sequence belongs to the universal ribosomal protein uS19 family.

In terms of biological role, protein S19 forms a complex with S13 that binds strongly to the 16S ribosomal RNA. The polypeptide is Small ribosomal subunit protein uS19 (Methanosarcina mazei (strain ATCC BAA-159 / DSM 3647 / Goe1 / Go1 / JCM 11833 / OCM 88) (Methanosarcina frisia)).